The sequence spans 101 residues: Cilia- and flagella-associated protein 141 (101 aa).

In terms of assembly, microtubule inner protein component of sperm flagellar doublet microtubules.

It localises to the cytoplasm. The protein resides in the cytoskeleton. Its subcellular location is the cilium axoneme. The protein localises to the flagellum axoneme. In terms of biological role, microtubule inner protein (MIP) part of the dynein-decorated doublet microtubules (DMTs) in cilia axoneme, which is required for motile cilia beating. The protein is Cilia- and flagella-associated protein 141 of Mus musculus (Mouse).